The sequence spans 2174 residues: MSASFVPNGASLEDCHCNLFCLADLTGIKWKKYVWQGPTSAPILFPVTEEDPILSSFSRCLKADVLGVWRRDQRPGRRELWIFWWGEDPSFADLIHHDLSEEEDGVWENGLSYECRTLLFKAVHNLLERCLMNRNFVRIGKWFVKPYEKDEKPINKSEHLSCSFTFFLHGDSNVCTSVEINQHQPVYLLSEEHITLAQQSNSPFQVILCPFGLNGTLTGQAFKMSDSATKKLIGEWKQFYPISCCLKEMSEEKQEDMDWEDDSLAAVEVLVAGVRMIYPACFVLVPQSDIPTPSPVGSTHCSSSCLGVHQVPASTRDPAMSSVTLTPPTSPEEVQTVDPQSVQKWVKFSSVSDGFNSDSTSHHGGKIPRKLANHVVDRVWQECNMNRAQNKRKYSASSGGLCEEATAAKVASWDFVEATQRTNCSCLRHKNLKSRNAGQQGQAPSLGQQQQILPKHKTNEKQEKSEKPQKRPLTPFHHRVSVSDDVGMDADSASQRLVISAPDSQVRFSNIRTNDVAKTPQMHGTEMANSPQPPPLSPHPCDVVDEGVTKTPSTPQSQHFYQMPTPDPLVPSKPMEDRIDSLSQSFPPQYQEAVEPTVYVGTAVNLEEDEANIAWKYYKFPKKKDVEFLPPQLPSDKFKDDPVGPFGQESVTSVTELMVQCKKPLKVSDELVQQYQIKNQCLSAIASDAEQEPKIDPYAFVEGDEEFLFPDKKDRQNSEREAGKKHKVEDGTSSVTVLSHEEDAMSLFSPSIKQDAPRPTSHARPPSTSLIYDSDLAVSYTDLDNLFNSDEDELTPGSKKSANGSDDKASCKESKTGNLDPLSCISTADLHKMYPTPPSLEQHIMGFSPMNMNNKEYGSMDTTPGGTVLEGNSSSIGAQFKIEVDEGFCSPKPSEIKDFSYVYKPENCQILVGCSMFAPLKTLPSQYLPPIKLPEECIYRQSWTVGKLELLSSGPSMPFIKEGDGSNMDQEYGTAYTPQTHTSFGMPPSSAPPSNSGAGILPSPSTPRFPTPRTPRTPRTPRGAGGPASAQGSVKYENSDLYSPASTPSTCRPLNSVEPATVPSIPEAHSLYVNLILSESVMNLFKDCNFDSCCICVCNMNIKGADVGVYIPDPTQEAQYRCTCGFSAVMNRKFGNNSGLFLEDELDIIGRNTDCGKEAEKRFEALRATSAEHVNGGLKESEKLSDDLILLLQDQCTNLFSPFGAADQDPFPKSGVISNWVRVEERDCCNDCYLALEHGRQFMDNMSGGKVDEALVKSSCLHPWSKRNDVSMQCSQDILRMLLSLQPVLQDAIQKKRTVRPWGVQGPLTWQQFHKMAGRGSYGTDESPEPLPIPTFLLGYDYDYLVLSPFALPYWERLMLEPYGSQRDIAYVVLCPENEALLNGAKSFFRDLTAIYESCRLGQHRPVSRLLTDGIMRVGSTASKKLSEKLVAEWFSQAADGNNEAFSKLKLYAQVCRYDLGPYLASLPLDSSLLSQPNLVAPTSQSLITPPQMTNTGNANTPSATLASAASSTMTVTSGVAISTSVATANSTLTTASTSSSSSSNLNSGVSSNKLPSFPPFGSMNSNAAGSMSTQANTVQSGQLGGQQTSALQTAGISGESSSLPTQPHPDVSESTMDRDKVGIPTDGDSHAVTYPPAIVVYIIDPFTYENTDESTNSSSVWTLGLLRCFLEMVQTLPPHIKSTVSVQIIPCQYLLQPVKHEDREIYPQHLKSLAFSAFTQCRRPLPTSTNVKTLTGFGPGLAMETALRSPDRPECIRLYAPPFILAPVKDKQTELGETFGEAGQKYNVLFVGYCLSHDQRWILASCTDLYGELLETCIINIDVPNRARRKKSSARKFGLQKLWEWCLGLVQMSSLPWRVVIGRLGRIGHGELKDWSCLLSRRNLQSLSKRLKDMCRMCGISAADSPSILSACLVAMEPQGSFVIMPDSVSTGSVFGRSTTLNMQTSQLNTPQDTSCTHILVFPTSASVQVASATYTTENLDLAFNPNNDGADGMGIFDLLDTGDDLDPDIINILPASPTGSPVHSPGSHYPHGGDAGKGQSTDRLLSTEPHEEVPNILQQPLALGYFVSTAKAGPLPDWFWSACPQAQYQCPLFLKASLHLHVPSVQSDELLHSKHSHPLDSNQTSDVLRFVLEQYNALSWLTCDPATQDRRSCLPIHFVVLNQLYNFIMNML.

A Phosphoserine modification is found at serine 395. Residues 435 to 477 form a disordered region; that stretch reads RNAGQQGQAPSLGQQQQILPKHKTNEKQEKSEKPQKRPLTPFH. A compositionally biased stretch (low complexity) spans 438–451; it reads GQQGQAPSLGQQQQ. Basic and acidic residues predominate over residues 457–469; sequence KTNEKQEKSEKPQ. Residues serine 500, serine 504, serine 530, and serine 537 each carry the phosphoserine modification. The span at 709–730 shows a compositional bias: basic and acidic residues; that stretch reads FPDKKDRQNSEREAGKKHKVED. Disordered regions lie at residues 709-735, 749-769, and 787-816; these read FPDK…TSSV, SPSI…PSTS, and FNSD…ESKT. The span at 805–815 shows a compositional bias: basic and acidic residues; it reads SDDKASCKESK. Serine 826 and serine 890 each carry phosphoserine. Residues 959–1054 form a disordered region; it reads FIKEGDGSNM…ASTPSTCRPL (96 aa). Residues 992 to 1003 show a composition bias toward low complexity; sequence PPSNSGAGILPS. The span at 1004–1015 shows a compositional bias: pro residues; that stretch reads PSTPRFPTPRTP. The residue at position 1029 (serine 1029) is a Phosphoserine. Positions 1040-1053 are enriched in polar residues; the sequence is DLYSPASTPSTCRP. Short sequence motifs (LXXLL motif) lie at residues 1188–1192 and 1279–1283; these read LILLL and LRMLL. 2 stretches are compositionally biased toward polar residues: residues 1484-1498 and 1563-1606; these read SQSL…NTGN and SMNS…SLPT. Disordered regions lie at residues 1484 to 1505, 1557 to 1617, and 2015 to 2048; these read SQSL…PSAT, SFPP…ESTM, and LPAS…RLLS.

Belongs to the Mediator complex subunit 13 family. In terms of assembly, component of the Mediator complex, which is composed of MED1, MED4, MED6, MED7, MED8, MED9, MED10, MED11, MED12, MED13, MED13L, MED14, MED15, MED16, MED17, MED18, MED19, MED20, MED21, MED22, MED23, MED24, MED25, MED26, MED27, MED29, MED30, MED31, CCNC, CDK8 and CDC2L6/CDK11. The MED12, MED13, CCNC and CDK8 subunits form a distinct module termed the CDK8 module. Mediator containing the CDK8 module is less active than Mediator lacking this module in supporting transcriptional activation. Individual preparations of the Mediator complex lacking one or more distinct subunits have been variously termed ARC, CRSP, DRIP, PC2, SMCC and TRAP. As to expression, ubiquitous.

The protein localises to the nucleus. In terms of biological role, component of the Mediator complex, a coactivator involved in the regulated transcription of nearly all RNA polymerase II-dependent genes. Mediator functions as a bridge to convey information from gene-specific regulatory proteins to the basal RNA polymerase II transcription machinery. Mediator is recruited to promoters by direct interactions with regulatory proteins and serves as a scaffold for the assembly of a functional preinitiation complex with RNA polymerase II and the general transcription factors. This chain is Mediator of RNA polymerase II transcription subunit 13, found in Homo sapiens (Human).